The primary structure comprises 449 residues: 23S rRNA (uracil(1939)-C(5))-methyltransferase RlmD (449 aa).

The TRAM domain maps to 12 to 70 (SKQLSAKQSFSVHQLDHLGAGIAQHQGKVVFIPGALPSETVQAQLTEQKKNYARAKLIK). [4Fe-4S] cluster is bound by residues Cys83, Cys89, Cys92, and Cys170. Residues Gln282, Phe311, Asn316, Glu332, Asp359, and Asp379 each contribute to the S-adenosyl-L-methionine site. Cys405 serves as the catalytic Nucleophile.

Belongs to the class I-like SAM-binding methyltransferase superfamily. RNA M5U methyltransferase family. RlmD subfamily.

It carries out the reaction uridine(1939) in 23S rRNA + S-adenosyl-L-methionine = 5-methyluridine(1939) in 23S rRNA + S-adenosyl-L-homocysteine + H(+). In terms of biological role, catalyzes the formation of 5-methyl-uridine at position 1939 (m5U1939) in 23S rRNA. In Shewanella sp. (strain MR-7), this protein is 23S rRNA (uracil(1939)-C(5))-methyltransferase RlmD.